Here is a 329-residue protein sequence, read N- to C-terminus: GTPase Obg (329 aa).

The Obg domain maps to 1 to 159 (MQFIDQARIT…WPLQLELKLL (159 aa)). One can recognise an OBG-type G domain in the interval 160–328 (AEVGIIGLPN…LLDQVWQLLG (169 aa)). ATP-binding positions include 166–173 (GLPNAGKS), 191–195 (FTTLV), 213–216 (DIPG), 280–283 (NKLE), and 309–311 (SAV). Mg(2+)-binding residues include Ser173 and Thr193.

It belongs to the TRAFAC class OBG-HflX-like GTPase superfamily. OBG GTPase family. In terms of assembly, monomer. Requires Mg(2+) as cofactor.

The protein resides in the cytoplasm. In terms of biological role, an essential GTPase which binds GTP, GDP and possibly (p)ppGpp with moderate affinity, with high nucleotide exchange rates and a fairly low GTP hydrolysis rate. Plays a role in control of the cell cycle, stress response, ribosome biogenesis and in those bacteria that undergo differentiation, in morphogenesis control. The protein is GTPase Obg of Synechococcus sp. (strain WH7803).